A 437-amino-acid chain; its full sequence is Enolase (437 aa).

Residues His160 and Glu169 each coordinate substrate. Glu212 serves as the catalytic Proton donor. Positions 247, 296, and 321 each coordinate Mg(2+). Residues Glu296 and Asp321 each coordinate substrate. The Proton acceptor role is filled by Lys346. Substrate-binding positions include 373-376 (SHRS) and Lys397.

Belongs to the enolase family. Homodimer. Mg(2+) serves as cofactor.

The protein resides in the cytoplasm. It carries out the reaction (2R)-2-phosphoglycerate = phosphoenolpyruvate + H2O. It participates in carbohydrate degradation; glycolysis; pyruvate from D-glyceraldehyde 3-phosphate: step 4/5. The sequence is that of Enolase (ENO) from Eremothecium gossypii (strain ATCC 10895 / CBS 109.51 / FGSC 9923 / NRRL Y-1056) (Yeast).